Consider the following 173-residue polypeptide: Alpha-crystallin B chain (173 aa).

Met1 carries the N-acetylmethionine modification. The sHSP domain maps to 54-162 (RLPSWIESGL…PERSIPITRE (109 aa)). His81, His102, Glu104, and His109 together coordinate Zn(2+).

It belongs to the small heat shock protein (HSP20) family. Heteromer composed of three CRYAA and one CRYAB subunits. Aggregates with homologous proteins, including the small heat shock protein HSPB1, to form large heteromeric complexes. Inter-subunit bridging via zinc ions enhances stability, which is crucial as there is no protein turn over in the lens.

Its function is as follows. May contribute to the transparency and refractive index of the lens. This Aquarana catesbeiana (American bullfrog) protein is Alpha-crystallin B chain (CRYAB).